A 156-amino-acid chain; its full sequence is ATP synthase subunit b (156 aa).

A helical transmembrane segment spans residues 11-31 (AIAFVLFVLFCMKYVWPPIMA).

The protein belongs to the ATPase B chain family. As to quaternary structure, F-type ATPases have 2 components, F(1) - the catalytic core - and F(0) - the membrane proton channel. F(1) has five subunits: alpha(3), beta(3), gamma(1), delta(1), epsilon(1). F(0) has three main subunits: a(1), b(2) and c(10-14). The alpha and beta chains form an alternating ring which encloses part of the gamma chain. F(1) is attached to F(0) by a central stalk formed by the gamma and epsilon chains, while a peripheral stalk is formed by the delta and b chains.

Its subcellular location is the cell inner membrane. In terms of biological role, f(1)F(0) ATP synthase produces ATP from ADP in the presence of a proton or sodium gradient. F-type ATPases consist of two structural domains, F(1) containing the extramembraneous catalytic core and F(0) containing the membrane proton channel, linked together by a central stalk and a peripheral stalk. During catalysis, ATP synthesis in the catalytic domain of F(1) is coupled via a rotary mechanism of the central stalk subunits to proton translocation. Its function is as follows. Component of the F(0) channel, it forms part of the peripheral stalk, linking F(1) to F(0). This is ATP synthase subunit b from Proteus mirabilis (strain HI4320).